A 168-amino-acid polypeptide reads, in one-letter code: Transcription antitermination protein NusB (168 aa).

The segment at 147 to 168 is disordered; sequence RGLINNSSRNTSRSEEKHSTEK. Positions 158 to 168 are enriched in basic and acidic residues; it reads SRSEEKHSTEK.

Belongs to the NusB family.

In terms of biological role, involved in transcription antitermination. Required for transcription of ribosomal RNA (rRNA) genes. Binds specifically to the boxA antiterminator sequence of the ribosomal RNA (rrn) operons. In Chlorobium phaeobacteroides (strain BS1), this protein is Transcription antitermination protein NusB.